We begin with the raw amino-acid sequence, 658 residues long: DNA mismatch repair protein MutL (658 aa).

Residues 114-130 (RQEDSSHATQVKAEDGK) are compositionally biased toward basic and acidic residues. Disordered regions lie at residues 114–137 (RQED…PTAA), 369–401 (DYPT…APQQ), and 438–457 (FGNM…LSDG).

Belongs to the DNA mismatch repair MutL/HexB family.

In terms of biological role, this protein is involved in the repair of mismatches in DNA. It is required for dam-dependent methyl-directed DNA mismatch repair. May act as a 'molecular matchmaker', a protein that promotes the formation of a stable complex between two or more DNA-binding proteins in an ATP-dependent manner without itself being part of a final effector complex. This Neisseria meningitidis serogroup A / serotype 4A (strain DSM 15465 / Z2491) protein is DNA mismatch repair protein MutL.